The following is a 250-amino-acid chain: Proteasome subunit alpha type-4-1 (250 aa).

The protein belongs to the peptidase T1A family. In terms of assembly, the 26S proteasome consists of a 20S proteasome core and two 19S regulatory subunits. The 20S proteasome core is composed of 28 subunits that are arranged in four stacked rings, resulting in a barrel-shaped structure. The two end rings are each formed by seven alpha subunits, and the two central rings are each formed by seven beta subunits. The catalytic chamber with the active sites is on the inside of the barrel.

The protein localises to the cytoplasm. The protein resides in the nucleus. Functionally, the proteasome is a multicatalytic proteinase complex which is characterized by its ability to cleave peptides with Arg, Phe, Tyr, Leu, and Glu adjacent to the leaving group at neutral or slightly basic pH. The proteasome has an ATP-dependent proteolytic activity. This Oryza sativa subsp. indica (Rice) protein is Proteasome subunit alpha type-4-1.